The sequence spans 411 residues: Acetylornithine aminotransferase (411 aa).

Residues 107–108 (GT) and Phe-141 contribute to the pyridoxal 5'-phosphate site. N(2)-acetyl-L-ornithine is bound at residue Arg-144. Residue 227-230 (DEIQ) participates in pyridoxal 5'-phosphate binding. Residue Lys-256 is modified to N6-(pyridoxal phosphate)lysine. Thr-284 is a N(2)-acetyl-L-ornithine binding site. Thr-285 serves as a coordination point for pyridoxal 5'-phosphate.

The protein belongs to the class-III pyridoxal-phosphate-dependent aminotransferase family. ArgD subfamily. In terms of assembly, homodimer. The cofactor is pyridoxal 5'-phosphate.

It is found in the cytoplasm. The catalysed reaction is N(2)-acetyl-L-ornithine + 2-oxoglutarate = N-acetyl-L-glutamate 5-semialdehyde + L-glutamate. Its pathway is amino-acid biosynthesis; L-arginine biosynthesis; N(2)-acetyl-L-ornithine from L-glutamate: step 4/4. This chain is Acetylornithine aminotransferase, found in Xylella fastidiosa (strain 9a5c).